A 492-amino-acid chain; its full sequence is 2,3-bisphosphoglycerate-independent phosphoglycerate mutase (492 aa).

Positions 11 and 61 each coordinate Mn(2+). Catalysis depends on serine 61, which acts as the Phosphoserine intermediate. Substrate-binding positions include histidine 118, 147-148 (RD), arginine 178, arginine 184, 248-251 (RNDR), and lysine 320. 5 residues coordinate Mn(2+): aspartate 386, histidine 390, aspartate 427, histidine 428, and histidine 445.

This sequence belongs to the BPG-independent phosphoglycerate mutase family. As to quaternary structure, monomer. It depends on Mn(2+) as a cofactor.

It carries out the reaction (2R)-2-phosphoglycerate = (2R)-3-phosphoglycerate. The protein operates within carbohydrate degradation; glycolysis; pyruvate from D-glyceraldehyde 3-phosphate: step 3/5. In terms of biological role, catalyzes the interconversion of 2-phosphoglycerate and 3-phosphoglycerate. This is 2,3-bisphosphoglycerate-independent phosphoglycerate mutase from Campylobacter jejuni subsp. doylei (strain ATCC BAA-1458 / RM4099 / 269.97).